The following is a 518-amino-acid chain: Triacylglycerol lipase OBL1 (518 aa).

A helical membrane pass occupies residues 93–113 (GFVVDFFLNLFSANGGFFGLL). A GXSXG motif is present at residues 337–341 (GHSLG). Serine 339 serves as the catalytic Nucleophile. Residues aspartate 403 and histidine 496 each act as charge relay system in the active site.

This sequence belongs to the AB hydrolase superfamily. Lipase family. In terms of tissue distribution, expressed in pollen grains, pollen tubes, developing embryos, developing seeds and germinating seeds.

Its subcellular location is the lipid droplet. The protein resides in the membrane. It carries out the reaction 1,2-di-(9Z-octadecenoyl)-glycerol + (9Z)-octadecenoate + H(+) = 1,2,3-tri-(9Z-octadecenoyl)-glycerol + H2O. It catalyses the reaction 1-(9Z-octadecenoyl)-glycerol + H2O = glycerol + (9Z)-octadecenoate + H(+). Its function is as follows. Acid lipase that can hydrolyze a range of triacylglycerols without a clear preference for acyl-chains. Can also cleave 1,2-diacylglycerol, 1,3-diacylglycerol and 1-monoacylglycerol, but not phosphatidylcholine, phosphatidylethanolamine, or sterol esters. Required for pollen tube growth. Triacylglycerol hydrolysis by OBL1 may provide acyl groups for the synthesis of membrane lipids in growing pollen tubes. In Arabidopsis thaliana (Mouse-ear cress), this protein is Triacylglycerol lipase OBL1.